The primary structure comprises 375 residues: Succinyl-diaminopimelate desuccinylase (375 aa).

Zn(2+) is bound at residue His66. Asp68 is a catalytic residue. Asp99 is a binding site for Zn(2+). Glu133 acts as the Proton acceptor in catalysis. Residues Glu134, Glu162, and His348 each coordinate Zn(2+).

Belongs to the peptidase M20A family. DapE subfamily. In terms of assembly, homodimer. Zn(2+) serves as cofactor. Requires Co(2+) as cofactor.

The catalysed reaction is N-succinyl-(2S,6S)-2,6-diaminopimelate + H2O = (2S,6S)-2,6-diaminopimelate + succinate. Its pathway is amino-acid biosynthesis; L-lysine biosynthesis via DAP pathway; LL-2,6-diaminopimelate from (S)-tetrahydrodipicolinate (succinylase route): step 3/3. In terms of biological role, catalyzes the hydrolysis of N-succinyl-L,L-diaminopimelic acid (SDAP), forming succinate and LL-2,6-diaminopimelate (DAP), an intermediate involved in the bacterial biosynthesis of lysine and meso-diaminopimelic acid, an essential component of bacterial cell walls. This Erwinia tasmaniensis (strain DSM 17950 / CFBP 7177 / CIP 109463 / NCPPB 4357 / Et1/99) protein is Succinyl-diaminopimelate desuccinylase.